Here is a 268-residue protein sequence, read N- to C-terminus: 3-methyl-2-oxobutanoate hydroxymethyltransferase (268 aa).

Residues Asp-46 and Asp-85 each contribute to the Mg(2+) site. 3-methyl-2-oxobutanoate contacts are provided by residues 46–47 (DS), Asp-85, and Lys-114. Residue Glu-116 coordinates Mg(2+). Glu-183 (proton acceptor) is an active-site residue.

This sequence belongs to the PanB family. In terms of assembly, homodecamer; pentamer of dimers. It depends on Mg(2+) as a cofactor.

It is found in the cytoplasm. It catalyses the reaction 3-methyl-2-oxobutanoate + (6R)-5,10-methylene-5,6,7,8-tetrahydrofolate + H2O = 2-dehydropantoate + (6S)-5,6,7,8-tetrahydrofolate. It participates in cofactor biosynthesis; coenzyme A biosynthesis. Functionally, catalyzes the reversible reaction in which hydroxymethyl group from 5,10-methylenetetrahydrofolate is transferred onto alpha-ketoisovalerate to form ketopantoate. In Sulfolobus acidocaldarius (strain ATCC 33909 / DSM 639 / JCM 8929 / NBRC 15157 / NCIMB 11770), this protein is 3-methyl-2-oxobutanoate hydroxymethyltransferase.